We begin with the raw amino-acid sequence, 203 residues long: MGVRNHRLLLLRHGETAWSTLGRHTGGTEVELTDTGRTQAELAGQLLGELELDDPIVICSPRRRTLDTAKLAGLTVNEVTGLLAEWDYGSYEGLTTPQIRESEPDWLVWTHGCPAGESVAQVNDRADSAVALALEHMSSRDVLFVSHGHFSRAVITRWVQLPLAEGSRFAMPTASIGICGFEHGVRQLAVLGLTGHPQPIAAG.

His13 (tele-phosphohistidine intermediate) is an active-site residue. Glu85 acts as the Proton donor/acceptor in catalysis.

Belongs to the phosphoglycerate mutase family. As to quaternary structure, homodimer.

The enzyme catalyses a phosphate monoester + H2O = an alcohol + phosphate. The catalysed reaction is beta-D-fructose 1,6-bisphosphate + H2O = beta-D-fructose 6-phosphate + phosphate. The protein operates within carbohydrate biosynthesis; gluconeogenesis. Its activity is regulated as follows. In contrast to classical FBPases, is resistant to inhibition by lithium. Phosphatase with a broad specificity. Can dephosphorylate a variety of substrates including phosphorylated sugars like fructose-6-phosphate (F6P). Is able to function in vivo as a fructose-1,6-bisphosphatase (FBPase) and to maintain gluconeogenesis when the classical FBPase GlpX is absent. Shows negligible phosphoglycerate mutase activity. Has no phosphatase activity against 3-phosphoglycerate, 2,3-bisphosphoglycerate, or hydrophobic substrates such as alpha-napthyl phosphate. This chain is Acid phosphatase, found in Mycobacterium tuberculosis (strain ATCC 25618 / H37Rv).